A 264-amino-acid polypeptide reads, in one-letter code: Thymidylate synthase (264 aa).

R21 contacts dUMP. H51 is a binding site for (6R)-5,10-methylene-5,6,7,8-tetrahydrofolate. 126–127 (RR) lines the dUMP pocket. Residue C146 is the Nucleophile of the active site. DUMP contacts are provided by residues 166-169 (RSAD), N177, and 207-209 (HLY). Residue D169 participates in (6R)-5,10-methylene-5,6,7,8-tetrahydrofolate binding. A263 provides a ligand contact to (6R)-5,10-methylene-5,6,7,8-tetrahydrofolate.

The protein belongs to the thymidylate synthase family. Bacterial-type ThyA subfamily. Homodimer.

The protein resides in the cytoplasm. It catalyses the reaction dUMP + (6R)-5,10-methylene-5,6,7,8-tetrahydrofolate = 7,8-dihydrofolate + dTMP. It participates in pyrimidine metabolism; dTTP biosynthesis. In terms of biological role, catalyzes the reductive methylation of 2'-deoxyuridine-5'-monophosphate (dUMP) to 2'-deoxythymidine-5'-monophosphate (dTMP) while utilizing 5,10-methylenetetrahydrofolate (mTHF) as the methyl donor and reductant in the reaction, yielding dihydrofolate (DHF) as a by-product. This enzymatic reaction provides an intracellular de novo source of dTMP, an essential precursor for DNA biosynthesis. The sequence is that of Thymidylate synthase from Nitrosomonas eutropha (strain DSM 101675 / C91 / Nm57).